We begin with the raw amino-acid sequence, 319 residues long: ATP-dependent 6-phosphofructokinase (319 aa).

ATP is bound at residue glycine 11. ADP is bound at residue 21–25; sequence RAVVR. ATP-binding positions include 72–73 and 102–105; these read RY and GDGS. Aspartate 103 contacts Mg(2+). A substrate-binding site is contributed by 125–127; the sequence is TID. Aspartate 127 acts as the Proton acceptor in catalysis. An ADP-binding site is contributed by arginine 154. Substrate contacts are provided by residues arginine 162 and 169 to 171; that span reads MGR. ADP is bound by residues 185 to 187, arginine 211, and 213 to 215; these read GAE and KKH. Substrate is bound by residues glutamate 222, arginine 243, and 249-252; that span reads HVQR.

This sequence belongs to the phosphofructokinase type A (PFKA) family. ATP-dependent PFK group I subfamily. Prokaryotic clade 'B1' sub-subfamily. Homotetramer. Requires Mg(2+) as cofactor.

It is found in the cytoplasm. The enzyme catalyses beta-D-fructose 6-phosphate + ATP = beta-D-fructose 1,6-bisphosphate + ADP + H(+). It functions in the pathway carbohydrate degradation; glycolysis; D-glyceraldehyde 3-phosphate and glycerone phosphate from D-glucose: step 3/4. Its activity is regulated as follows. Allosterically activated by ADP and other diphosphonucleosides, and allosterically inhibited by phosphoenolpyruvate. Catalyzes the phosphorylation of D-fructose 6-phosphate to fructose 1,6-bisphosphate by ATP, the first committing step of glycolysis. This chain is ATP-dependent 6-phosphofructokinase, found in Listeria monocytogenes serotype 4a (strain HCC23).